A 309-amino-acid polypeptide reads, in one-letter code: MTMRASLAIENFLEMMSAERGAAQNTLESYRRDLEAAAEELAAKGVNLAEAETGHIRMTLDTMAAQGFAPTSQARRLSALRQFFRFLYSEGFRQDDPTGILDAPKKQKPLPKIMSVENVGRLLDRAALEANEAAEPGERIKALRLHALLETLYATGLRVSELVGLPVTVARTDHRFLLVRGKGSKDRMVPLSRKARDALQKFLTLRDSLPGSDDNPWLFPAFSESGHLARQVFARELKGLAARAGLAASSVSPHVLRHAFASHLLQNGADLRTVQQLLGHADISTTQIYTHVLEERLHKLVSEHHPLAD.

In terms of domain architecture, Core-binding (CB) spans 3-88; it reads MRASLAIENF…ALRQFFRFLY (86 aa). The Tyr recombinase domain occupies 109–302; that stretch reads PLPKIMSVEN…LEERLHKLVS (194 aa). Residues arginine 158, lysine 182, histidine 254, arginine 257, and histidine 280 contribute to the active site. The active-site O-(3'-phospho-DNA)-tyrosine intermediate is tyrosine 289.

The protein belongs to the 'phage' integrase family. XerD subfamily. In terms of assembly, forms a cyclic heterotetrameric complex composed of two molecules of XerC and two molecules of XerD.

It localises to the cytoplasm. Site-specific tyrosine recombinase, which acts by catalyzing the cutting and rejoining of the recombining DNA molecules. The XerC-XerD complex is essential to convert dimers of the bacterial chromosome into monomers to permit their segregation at cell division. It also contributes to the segregational stability of plasmids. The protein is Tyrosine recombinase XerD of Brucella suis biovar 1 (strain 1330).